We begin with the raw amino-acid sequence, 284 residues long: Protein phosphatase 1 regulatory subunit 3B (284 aa).

Residues 61-64 (RVSF) carry the PP1-binding motif motif. In terms of domain architecture, CBM21 spans 124 to 232 (RNRLQTNHVC…SNKGKNYRIT (109 aa)). Position 260 is a phosphoserine (Ser-260).

In terms of assembly, interacts with glycogen, PPP1CC catalytic subunit of PP1 and PYGL. Associates with glycogen particles. Forms complexes with debranching enzyme, glycogen phosphorylase, glycogen synthase and phosphorylase kinase which is necessary for its regulation of PP1 activity. Highly expressed in liver. Moderately expressed in kidney, heart, testis, spleen and lung. Weakly expressed in skeletal muscle (at protein level). Expressed predominantly in liver. Expressed moderately in heart. Expressed weakly in lung, kidney, spleen and skeletal muscle.

Functionally, acts as a glycogen-targeting subunit for phosphatase PP1. Facilitates interaction of the PP1 with enzymes of the glycogen metabolism and regulates its activity. Suppresses the rate at which PP1 dephosphorylates (inactivates) glycogen phosphorylase and enhances the rate at which it activates glycogen synthase and therefore limits glycogen breakdown. Its activity is inhibited by PYGL, resulting in inhibition of the glycogen synthase and glycogen phosphorylase phosphatase activities of PP1. Dramatically increases basal and insulin-stimulated glycogen synthesis upon overexpression in hepatocytes. The protein is Protein phosphatase 1 regulatory subunit 3B (Ppp1r3b) of Rattus norvegicus (Rat).